The sequence spans 393 residues: Probable alpha-1,6-mannosyltransferase MNN10 (393 aa).

At 1-52 (MSSVPYNSQLPISNHLEYDEDEKKSRGSKLGLKYKMIYWRKTLCSSLARWRK) the chain is on the cytoplasmic side. Residues 53–73 (LILLISLALFLFIWISDSTIS) form a helical; Signal-anchor for type II membrane protein membrane-spanning segment. Topologically, residues 74 to 393 (RNPSTTSFQG…RKWYTRFFFP (320 aa)) are lumenal. Residues 77–97 (STTSFQGQNSNDNKLSNTGSS) are disordered.

It belongs to the glycosyltransferase 34 family. In terms of assembly, component of the M-Pol II complex composed of ANP1, MNN9, MNN10, MNN11 and HOC1.

It localises to the endoplasmic reticulum membrane. Its subcellular location is the golgi apparatus. It is found in the cis-Golgi network membrane. Its function is as follows. Required for polarized growth and efficient budding. In terms of biological role, the M-Pol II complex possesses alpha-1,6-mannosyltransferase activity and is probably involved in the elongation of the mannan backbone of N-linked glycans on cell wall and periplasmic proteins. The polypeptide is Probable alpha-1,6-mannosyltransferase MNN10 (MNN10) (Saccharomyces cerevisiae (strain ATCC 204508 / S288c) (Baker's yeast)).